The following is a 317-amino-acid chain: Heme-binding protein HMX1 (317 aa).

Over 1–289 (MEDSSNTIIP…FNKDSATRRA (289 aa)) the chain is Cytoplasmic. A helical; Anchor for type IV membrane protein membrane pass occupies residues 290 to 310 (LHTVMLLVLSIIAIWVLYFLV).

Heme is required as a cofactor.

The protein localises to the endoplasmic reticulum membrane. Its function is as follows. Plays an important role in the degradation of heme under conditions of iron deprivation. The chain is Heme-binding protein HMX1 (HMX1) from Saccharomyces cerevisiae (strain ATCC 204508 / S288c) (Baker's yeast).